The primary structure comprises 29 residues: Small toxic protein ZorO (29 aa).

The chain crosses the membrane as a helical span at residues 10–27 (VLIAVLELLVALLRLIDL).

Its subcellular location is the cell inner membrane. Its function is as follows. Toxic component of a type I toxin-antitoxin (TA) system. Expression in the absence of its cognate antitoxin (small sRNA orzO) leads to cell stasis and a decrease in colony-forming units. Repression of ZorO toxicity requires base pairing between zorO mRNA and sRNA OrzO, as well as RNase III (rnc), suggesting the mRNA is degraded. Base pairing occurs between 18 bases in the 5' UTR of zorO mRNA and the 5' end of OrzO sRNA. sRNA OrzP, which differs only in 4 of these 18 bases, does not repress ZorO toxicity. Integration of the protein into the inner membrane damages membrane integrity and affects membrane potential. It leads to increased levels of hydroxyl radicals. The sequence is that of Small toxic protein ZorO from Escherichia coli O157:H7.